The primary structure comprises 66 residues: uncharacterized protein (66 aa).

This is an uncharacterized protein from Frog virus 3 (isolate Goorha) (FV-3).